Here is a 206-residue protein sequence, read N- to C-terminus: FMN-dependent NADH:quinone oxidoreductase (206 aa).

Residues serine 9, 15 to 17 (SVS), 95 to 98 (MYNF), and 139 to 142 (SRGG) contribute to the FMN site.

This sequence belongs to the azoreductase type 1 family. As to quaternary structure, homodimer. FMN is required as a cofactor.

It carries out the reaction 2 a quinone + NADH + H(+) = 2 a 1,4-benzosemiquinone + NAD(+). The enzyme catalyses N,N-dimethyl-1,4-phenylenediamine + anthranilate + 2 NAD(+) = 2-(4-dimethylaminophenyl)diazenylbenzoate + 2 NADH + 2 H(+). In terms of biological role, quinone reductase that provides resistance to thiol-specific stress caused by electrophilic quinones. Functionally, also exhibits azoreductase activity. Catalyzes the reductive cleavage of the azo bond in aromatic azo compounds to the corresponding amines. The sequence is that of FMN-dependent NADH:quinone oxidoreductase from Legionella pneumophila subsp. pneumophila (strain Philadelphia 1 / ATCC 33152 / DSM 7513).